The sequence spans 385 residues: Phosphate acyltransferase (385 aa).

Low complexity predominate over residues Met-1–Pro-17. Residues Met-1–Thr-28 form a disordered region.

Belongs to the PlsX family. In terms of assembly, homodimer. Probably interacts with PlsY.

The protein localises to the cytoplasm. It carries out the reaction a fatty acyl-[ACP] + phosphate = an acyl phosphate + holo-[ACP]. It participates in lipid metabolism; phospholipid metabolism. In terms of biological role, catalyzes the reversible formation of acyl-phosphate (acyl-PO(4)) from acyl-[acyl-carrier-protein] (acyl-ACP). This enzyme utilizes acyl-ACP as fatty acyl donor, but not acyl-CoA. In Dinoroseobacter shibae (strain DSM 16493 / NCIMB 14021 / DFL 12), this protein is Phosphate acyltransferase.